Here is a 231-residue protein sequence, read N- to C-terminus: GFP-like fluorescent chromoprotein FP538 (231 aa).

Phe65 is modified (phenylalanine amide; atypical). Residues 66–68 (KYG) constitute a cross-link (2-tetrahydro-2-pyridyl-5-imidazolinone (Lys-Gly)). 2,3-didehydrotyrosine is present on Tyr67.

The protein belongs to the GFP family. In terms of assembly, homotetramer. Post-translationally, contains a chromophore consisting of modified amino acid residues. The chromophore is formed by autocatalytic backbone condensation between Xaa-N and Gly-(N+2), and oxidation of Tyr-(N+1) to didehydrotyrosine. In addition, the residue N lysine undergoes cyclization. The alpha-amino nitrogen is replaced by the epsilon-amino nitrogen, the peptide chain is broken, residue N-1 is released as an amide, and a double bond is formed between the alpha-carbon and the nitrogen so that a tetrahydropyridine ring results. Maturation of the chromophore requires nothing other than molecular oxygen. As to expression, tentacle and oral disk.

Functionally, pigment protein that is yellow in color. The chain is GFP-like fluorescent chromoprotein FP538 from Zoanthus sp. (Green polyp).